The primary structure comprises 494 residues: AAA-ATPase At2g18190 (494 aa).

The helical transmembrane segment at Ser-13–Phe-29 threads the bilayer. An ATP-binding site is contributed by Gly-251 to Ser-258. Residues Thr-459–Asn-470 show a composition bias toward basic and acidic residues. The disordered stretch occupies residues Thr-459–Asn-494. Residues Lys-479–Asn-494 show a composition bias toward basic residues.

The protein belongs to the AAA ATPase family. BCS1 subfamily. The cofactor is Mg(2+).

It localises to the membrane. It carries out the reaction ATP + H2O = ADP + phosphate + H(+). This chain is AAA-ATPase At2g18190, found in Arabidopsis thaliana (Mouse-ear cress).